The chain runs to 710 residues: Choline transporter-like protein 5 (710 aa).

Positions 1–21 (MARKRKPPSSQGDPRRYDPDF) are disordered. The Cytoplasmic portion of the chain corresponds to 1–32 (MARKRKPPSSQGDPRRYDPDFQGPTAKRTCTD). The helical transmembrane segment at 33–53 (VLCCLIFLLFILGYVLLGLLA) threads the bilayer. At 54–236 (WAHGDPRKMA…KLLEDYATSW (183 aa)) the chain is on the extracellular side. Asn82 and Asn184 each carry an N-linked (GlcNAc...) asparagine glycan. A helical transmembrane segment spans residues 237–257 (KWILIGLTVAMALSWTFLILL). At 258-260 (RFT) the chain is on the cytoplasmic side. The chain crosses the membrane as a helical span at residues 261–281 (AGFLFWFFIFGVLGIIGYGIW). Topologically, residues 282-319 (YCFLEYSSIQQRPQSTFWMYGFGIQRRVNMFFHLKETW) are extracellular. Residues 320 to 340 (FSMMIILSAIEIIIIIVLIFL) traverse the membrane as a helical segment. Residues 341–345 (RTRIQ) are Cytoplasmic-facing. Residues 346–366 (VAIILLQEGSKAISYLPSALI) traverse the membrane as a helical segment. Residues 367–368 (YP) lie on the Extracellular side of the membrane. A helical transmembrane segment spans residues 369-389 (VLTFILLSICISYWAVTAVFL). The Cytoplasmic segment spans residues 390–454 (ATSGVPIFKV…NYILTFQVYN (65 aa)). A helical membrane pass occupies residues 455-475 (LFAFLWLINFVIALGQCALAG). Residues 476-509 (AFASYYWAMKKPDDIPPYPLFTAFGRAVRYHTGS) lie on the Extracellular side of the membrane. Residues 510–530 (LAFGSLILASVQMFKVIVEYL) traverse the membrane as a helical segment. Residues 531-604 (DRRLKKAQNS…KVTVTDEVTY (74 aa)) are Cytoplasmic-facing. A helical membrane pass occupies residues 605 to 625 (FVLLLGKVLVSGIVGVLAFLL). Topologically, residues 626 to 643 (FTERLQIIVDGPTTLNYY) are extracellular. A helical transmembrane segment spans residues 644-664 (WVPFLTLVFGSYMIAHGFFSV). Residues 665–710 (YSMCVETIFICFLEDLERNEGSPSRPYFVTPALMNILLEQGKIKKQ) are Cytoplasmic-facing.

The protein belongs to the CTL (choline transporter-like) family.

Its subcellular location is the cell membrane. It carries out the reaction choline(out) + n H(+)(in) = choline(in) + n H(+)(out). Functionally, choline/H+ antiporter. The protein is Choline transporter-like protein 5 (Slc44a5) of Mus musculus (Mouse).